The sequence spans 184 residues: ATP synthase subunit delta (184 aa).

Belongs to the ATPase delta chain family. In terms of assembly, F-type ATPases have 2 components, F(1) - the catalytic core - and F(0) - the membrane proton channel. F(1) has five subunits: alpha(3), beta(3), gamma(1), delta(1), epsilon(1). CF(0) has four main subunits: a(1), b(1), b'(1) and c(10-14). The alpha and beta chains form an alternating ring which encloses part of the gamma chain. F(1) is attached to F(0) by a central stalk formed by the gamma and epsilon chains, while a peripheral stalk is formed by the delta, b and b' chains.

The protein localises to the cell inner membrane. Its function is as follows. F(1)F(0) ATP synthase produces ATP from ADP in the presence of a proton or sodium gradient. F-type ATPases consist of two structural domains, F(1) containing the extramembraneous catalytic core and F(0) containing the membrane proton channel, linked together by a central stalk and a peripheral stalk. During catalysis, ATP synthesis in the catalytic domain of F(1) is coupled via a rotary mechanism of the central stalk subunits to proton translocation. This protein is part of the stalk that links CF(0) to CF(1). It either transmits conformational changes from CF(0) to CF(1) or is implicated in proton conduction. This chain is ATP synthase subunit delta, found in Erythrobacter litoralis (strain HTCC2594).